Consider the following 215-residue polypeptide: uncharacterized protein (215 aa).

Positions 1–29 (MDKVQSGFLILFLFLMECQLHLCLPYADG) are cleaved as a signal peptide. The Extracellular segment spans residues 30–100 (LHPTGNITGL…IIRHRPALVK (71 aa)). A helical transmembrane segment spans residues 101-121 (VILISSVAFSIALICGMAISY). Topologically, residues 122-215 (MIYRLAQAEE…ASHNGKMEDL (94 aa)) are cytoplasmic. A disordered region spans residues 191 to 215 (LKEEQNSVTENKTKNASHNGKMEDL). A compositionally biased stretch (polar residues) spans 196–208 (NSVTENKTKNASH).

The protein resides in the membrane. This is an uncharacterized protein from Homo sapiens (Human).